The sequence spans 46 residues: Protein krueppel (46 aa).

3 consecutive C2H2-type zinc fingers follow at residues 1-4 (MRLH), 10-32 (YHCT…LRVH), and 38-46 (YACELCTSK).

Belongs to the krueppel C2H2-type zinc-finger protein family.

The protein localises to the nucleus. Krueppel is a gap class segmentation protein. This Lithobius forficatus (Centipede) protein is Protein krueppel (Kr).